The following is a 71-amino-acid chain: Venom peptide 2-long (71 aa).

The N-terminal stretch at 1-24 (MKQSIIIALFATIAVMACLQMVAA) is a signal peptide. AXPX repeat units lie at residues 24 to 27 (AVPA), 32 to 35 (AAPG), 44 to 47 (ASPE), 50 to 53 (ASPE), and 54 to 57 (AEPI). Positions 25–54 (VPAPVPEAAPGPVAEAEAYASPEALASPEA) are excised as a propeptide. At leucine 68 the chain carries Leucine amide.

The protein belongs to the MCD family. Protonectin subfamily. In terms of tissue distribution, expressed by the venom gland.

It localises to the secreted. It is found in the target cell membrane. In terms of biological role, antimicrobial peptide with strong activity against the fungus B.cinerea (MIC=0.5 ug/ml), and poor activities against the fungus C.albicans (MIC=100 ug/ml), the Gram-positive bacterium S.aureus (MIC=125 ug/ml) and the Gram-negative bacterium E.coli (MIC=125 ug/ml). Its function is as follows. Antimicrobial peptide with strong activity against the fungus B.cinerea (MIC=0.4 uM), and poor activities against the fungus C.albicans (MIC=16 uM), the Gram-positive bacterium S.aureus (MIC=20 uM) and the Gram-negative bacterium E.coli (MIC=79 uM). Shows cytolytic activity against insect cell lines. Has potent hemolytic activity against ovine erythrocytes. Has potent hemolytic activity against human erythrocytes (EC(50)=31 uM). In vivo, peptide injection in the vicinity of the head and thorax of lepidopteran larvae induces feeding disorder followed by death due to starvation. This is Venom peptide 2-long from Orancistrocerus drewseni (Solitary wasp).